The sequence spans 440 residues: Cytochrome c biogenesis protein Ccs1 (440 aa).

The next 3 helical transmembrane spans lie at 25 to 45 (LQFS…GTVI), 84 to 104 (TWWF…CSIS), and 170 to 190 (LAPI…VLGL).

The protein belongs to the Ccs1/CcsB family. As to quaternary structure, may interact with CcsA.

Its subcellular location is the plastid. The protein localises to the chloroplast thylakoid membrane. Functionally, required during biogenesis of c-type cytochromes (cytochrome c6 and cytochrome f) at the step of heme attachment. The polypeptide is Cytochrome c biogenesis protein Ccs1 (Pyropia yezoensis (Susabi-nori)).